A 649-amino-acid chain; its full sequence is tRNA-guanine(15) transglycosylase (649 aa).

The Nucleophile role is filled by D88. Residues D123 and A194 each coordinate substrate. Zn(2+) contacts are provided by C280, C282, and C285. Positions 573-648 constitute a PUA domain; the sequence is NYRIVIDSSV…VAATLRGGIK (76 aa).

It belongs to the archaeosine tRNA-ribosyltransferase family. Zn(2+) is required as a cofactor.

It carries out the reaction guanosine(15) in tRNA + 7-cyano-7-deazaguanine = 7-cyano-7-carbaguanosine(15) in tRNA + guanine. Its pathway is tRNA modification; archaeosine-tRNA biosynthesis. Exchanges the guanine residue with 7-cyano-7-deazaguanine (preQ0) at position 15 in the dihydrouridine loop (D-loop) of archaeal tRNAs. The polypeptide is tRNA-guanine(15) transglycosylase (Methanococcus maripaludis (strain C5 / ATCC BAA-1333)).